A 251-amino-acid chain; its full sequence is Tyrosine transport ATP-binding protein (251 aa).

Positions leucine 2–glutamate 248 constitute an ABC transporter domain. Glycine 39–serine 46 contacts ATP.

It belongs to the ABC transporter superfamily. The complex is probably composed of two ATP-binding proteins (CDR20291_0806), two transmembrane proteins (CDR20291_0807) and a solute-binding protein (CDR20291_0805).

It is found in the cell membrane. The catalysed reaction is L-tyrosine(out) + ATP + H2O = L-tyrosine(in) + ADP + phosphate + H(+). Probably part of an ABC transporter complex involved in tyrosine uptake. May also import phenylalanine. Probably responsible for energy coupling to the transport system. This chain is Tyrosine transport ATP-binding protein, found in Clostridioides difficile (strain R20291) (Peptoclostridium difficile).